The sequence spans 401 residues: Homocitrate synthase (401 aa).

Positions valine 22–serine 271 constitute a Pyruvate carboxyltransferase domain. The tract at residues threonine 367 to valine 401 is disordered.

Belongs to the alpha-IPM synthase/homocitrate synthase family.

It carries out the reaction acetyl-CoA + 2-oxoglutarate + H2O = (2R)-homocitrate + CoA + H(+). Its function is as follows. This protein is a Fe-Mo-cofactor biosynthetic component. This Frankia sp. (strain FaC1) protein is Homocitrate synthase (nifV).